The primary structure comprises 150 residues: uncharacterized protein (150 aa).

An N-terminal signal peptide occupies residues 1 to 23 (MYSILIACLVLLLCLIIYVGHRA).

Belongs to the asfivirus EP152R family.

It is found in the virion. This is an uncharacterized protein from African swine fever virus (isolate Warthog/Namibia/Wart80/1980) (ASFV).